The primary structure comprises 206 residues: Somatotropin (206 aa).

The signal sequence occupies residues 1 to 18; it reads MLDRVVVLLSVLCLGVSS. A Pyrrolidone carboxylic acid modification is found at Gln19. His37 is a Zn(2+) binding site. Cys70 and Cys179 are disulfide-bonded. Zn(2+) is bound at residue Glu188. The cysteines at positions 196 and 204 are disulfide-linked.

It belongs to the somatotropin/prolactin family.

It localises to the secreted. Growth hormone plays an important role in growth control and is involved in the regulation of several anabolic processes. Implicated as an osmoregulatory substance important for seawater adaptation. The polypeptide is Somatotropin (gh) (Pseudocaranx dentex (White trevally)).